We begin with the raw amino-acid sequence, 423 residues long: Histidine--tRNA ligase (423 aa).

The protein belongs to the class-II aminoacyl-tRNA synthetase family. Homodimer.

It localises to the cytoplasm. It carries out the reaction tRNA(His) + L-histidine + ATP = L-histidyl-tRNA(His) + AMP + diphosphate + H(+). This is Histidine--tRNA ligase from Rhodococcus erythropolis (strain PR4 / NBRC 100887).